A 267-amino-acid polypeptide reads, in one-letter code: tRNA pseudouridine synthase A (267 aa).

The active-site Nucleophile is D51. Substrate is bound at residue Y109.

Belongs to the tRNA pseudouridine synthase TruA family. As to quaternary structure, homodimer.

The catalysed reaction is uridine(38/39/40) in tRNA = pseudouridine(38/39/40) in tRNA. Its function is as follows. Formation of pseudouridine at positions 38, 39 and 40 in the anticodon stem and loop of transfer RNAs. The chain is tRNA pseudouridine synthase A from Staphylococcus carnosus (strain TM300).